Reading from the N-terminus, the 215-residue chain is Beta-crystallin A3 (215 aa).

An N-terminal arm region spans residues 1–30 (MGEAAVPPELDTFPAAKMAQTNPLPVPMGP). 2 consecutive Beta/gamma crystallin 'Greek key' domains span residues 31 to 70 (WKITVYDQENFQGKRMEFTSACPNIMECGFDNIRSLKVEC) and 71 to 117 (GAWV…RPVC). Positions 118 to 123 (SANHKE) are connecting peptide. Beta/gamma crystallin 'Greek key' domains follow at residues 124–165 (SKIT…KIPC) and 166–214 (GAWV…RRIQ).

It belongs to the beta/gamma-crystallin family. Homo/heterodimer, or complexes of higher-order. The structure of beta-crystallin oligomers seems to be stabilized through interactions between the N-terminal arms.

Crystallins are the dominant structural components of the vertebrate eye lens. The sequence is that of Beta-crystallin A3 (CRYBA1) from Gallus gallus (Chicken).